The primary structure comprises 357 residues: Inner membrane protein YcfT (357 aa).

Residues 1–12 lie on the Cytoplasmic side of the membrane; sequence MKQKELWINQIK. Residues 13–33 traverse the membrane as a helical segment; sequence GLCICLVVIYHSVITFYPHLT. Topologically, residues 34 to 49 are periplasmic; sequence TFQHPLSEVLSKCWIY. Residues 50-70 traverse the membrane as a helical segment; it reads FNLYLAPFRMPVFFFISGYLI. Residues 71–86 are Cytoplasmic-facing; the sequence is RRYIDSVPWGNCLDKR. The chain crosses the membrane as a helical span at residues 87–107; sequence IWNIFWVLALWGVVQWLALSA. Over 108 to 135 the chain is Periplasmic; the sequence is LNQWLAPERDLSNASNAAYADSTGEFLH. The helical transmembrane segment at 136–156 threads the bilayer; the sequence is GMITASTSLWYLYALIVYFVV. Topologically, residues 157-162 are cytoplasmic; it reads CKIFSR. A helical membrane pass occupies residues 163–183; sequence LALPLFALFVLLSVAVNFVPT. Residues 184 to 196 are Periplasmic-facing; the sequence is PWWGMNSVIRNLP. Residues 197–217 traverse the membrane as a helical segment; it reads YYSLGAWFGATIMTCVKEVPL. Topologically, residues 218–231 are cytoplasmic; it reads RRHLLMASLLTVLA. A helical transmembrane segment spans residues 232 to 252; the sequence is VGAWLFTISLLLSLVSIVVIM. The Periplasmic portion of the chain corresponds to 253-310; it reads KLFYQYEQRFGMRSTSLLNVIGSNTIAIYTTHRILVEIFSLTLLAQMNAARWSPQVEL. A helical transmembrane segment spans residues 311 to 331; it reads TLLLVYPFVSLFICTVAGLLV. Over 332–357 the chain is Cytoplasmic; that stretch reads RKLSQRAFSDLLFSPPSLPAAVSYSR.

It belongs to the acyltransferase 3 family.

Its subcellular location is the cell inner membrane. In Escherichia coli (strain K12), this protein is Inner membrane protein YcfT (ycfT).